Reading from the N-terminus, the 210-residue chain is CLAVATA3/ESR (CLE)-related protein 4A-3 (210 aa).

A signal peptide spans 1 to 21 (MAKNAMLCLLILRVVLALAFA). The interval 21-83 (ATNKKGDEEP…SNQLPNNNWM (63 aa)) is required for secretion from the host cytoplasm to the host apoplasm. Asn-32 carries N-linked (GlcNAc...) asparagine glycosylation. The disordered stretch occupies residues 116-210 (RKTGMHSQRH…APAGPDPIHH (95 aa)). Composition is skewed to basic and acidic residues over residues 125–137 (HHEETTLEQEKRV) and 144–200 (PIHH…EKRG). The A-1 repeat unit spans residues 127–135 (EETTLEQEK). Positions 127-198 (EETTLEQEKR…HEDTTLEQEK (72 aa)) are 4 X approximate repeat A. One copy of the CLE-1 repeat lies at 136–147 (RVAGAGPDPIHH). Residues 136-210 (RVAGAGPDPI…APAGPDPIHH (75 aa)) are 4 X approximate repeat CLE. One copy of the A-2 repeat lies at 148 to 156 (QDTTLEQEK). The stretch at 157–168 (RAVPAGPDPKHH) is one CLE-2 repeat. The A-3 repeat unit spans residues 169 to 177 (EETTLEQEK). The stretch at 178 to 189 (RAVPAGPDPKHH) is one CLE-3 repeat. The A-4 repeat unit spans residues 190–198 (EDTTLEQEK). One copy of the CLE-4 repeat lies at 199 to 210 (RGAPAGPDPIHH).

It belongs to the CLV3/ESR signal peptide family. In terms of tissue distribution, highly expressed exclusively within the dorsal esophageal gland cell during syncytium formation in host plants.

It is found in the secreted. The protein resides in the host cytoplasm. The protein localises to the host extracellular space. Its subcellular location is the extracellular space. It localises to the apoplast. In terms of biological role, mimics host plant CLE extracellular signal peptides that regulate cell fate. May play a role in the differentiation or division of feeding cells (syncytia) induced in plant roots during infection. In Globodera rostochiensis (Golden nematode worm), this protein is CLAVATA3/ESR (CLE)-related protein 4A-3 (CLE-4A-3).